The primary structure comprises 381 residues: Estradiol 17-beta-dehydrogenase 2 (381 aa).

The chain crosses the membrane as a helical; Signal-anchor for type II membrane protein span at residues 4–24; it reads FASESAWLCLAAAAVLGGTLL. 83–112 is an NAD(+) binding site; that stretch reads QKAVLVTGADSGFGHGLAKHLDKLGFTVFA. S220 provides a ligand contact to substrate. The Proton acceptor role is filled by Y233.

The protein belongs to the short-chain dehydrogenases/reductases (SDR) family. As to quaternary structure, homodimer.

It is found in the endoplasmic reticulum membrane. The enzyme catalyses 17beta-estradiol + NAD(+) = estrone + NADH + H(+). It carries out the reaction testosterone + NAD(+) = androst-4-ene-3,17-dione + NADH + H(+). The catalysed reaction is 17beta-hydroxy-5alpha-androstan-3-one + NAD(+) = 5alpha-androstan-3,17-dione + NADH + H(+). It catalyses the reaction (20S)-hydroxypregn-4-en-3-one + NAD(+) = progesterone + NADH + H(+). Functionally, catalyzes the NAD-dependent oxidation of highly active 17beta-hydroxysteroids, such as estradiol (E2), testosterone (T), and dihydrotestosterone (DHT), to their less active forms and thus regulates the biological potency of these steroids. Oxidizes estradiol to estrone, testosterone to androstenedione, and dihydrotestosterone to 5alpha-androstan-3,17-dione. Also has 20-alpha-HSD activity. The chain is Estradiol 17-beta-dehydrogenase 2 (Hsd17b2) from Mus musculus (Mouse).